The following is a 492-amino-acid chain: Beta-Ala-His dipeptidase (492 aa).

Zn(2+) is bound at residue histidine 107. Aspartate 109 is an active-site residue. Position 140 (aspartate 140) interacts with Zn(2+). Glutamate 174 serves as the catalytic Proton acceptor. Glutamate 175 serves as a coordination point for Zn(2+). Serine 194 carries the post-translational modification Phosphoserine. Positions 203 and 453 each coordinate Zn(2+).

This sequence belongs to the peptidase M20A family. In terms of assembly, homodimer. Zn(2+) is required as a cofactor. As to expression, detected exclusively in kidney.

It is found in the secreted. The catalysed reaction is Preferential hydrolysis of the beta-Ala-|-His dipeptide (carnosine), and also anserine, Xaa-|-His dipeptides and other dipeptides including homocarnosine.. It carries out the reaction carnosine + H2O = beta-alanine + L-histidine. It catalyses the reaction anserine + H2O = N(pros)-methyl-L-histidine + beta-alanine. The enzyme catalyses L-alanyl-L-histidine + H2O = L-histidine + L-alanine. The catalysed reaction is glycyl-L-histidine + H2O = L-histidine + glycine. It carries out the reaction L-homocarnosine + H2O = 4-aminobutanoate + L-histidine. Functionally, catalyzes the peptide bond hydrolysis in Xaa-His dipeptides, displaying the highest activity toward carnosine (beta-alanyl-L-histidine) and anserine (beta-alanyl-3-methyl-histidine). This chain is Beta-Ala-His dipeptidase (Cndp1), found in Rattus norvegicus (Rat).